Reading from the N-terminus, the 472-residue chain is ATP-dependent rRNA helicase rrp3 (472 aa).

The tract at residues 1–51 (MPDVKKRKIAHEAPEHGSDAESTSSHESVAQQDDTAETQDEAAATETRPAP) is disordered. Over residues 10–19 (AHEAPEHGSD) the composition is skewed to basic and acidic residues. A compositionally biased stretch (polar residues) spans 20–29 (AESTSSHESV). The Q motif motif lies at 52-80 (KSFKDLGIIDQLCEACETMGYKAPTPIQA). The Helicase ATP-binding domain maps to 83–254 (IPLALQGRDL…RASLSNPLRV (172 aa)). ATP is bound at residue 96–103 (AETGSGKT). The short motif at 202–205 (DEAD) is the DEAD box element. The 145-residue stretch at 282-426 (YLVYLLNEFV…EYELEKDEVM (145 aa)) folds into the Helicase C-terminal domain. The disordered stretch occupies residues 451-472 (GTKAKKFGKGKRSRDEMDQEEG). The span at 452 to 462 (TKAKKFGKGKR) shows a compositional bias: basic residues.

Belongs to the DEAD box helicase family. DDX47/RRP3 subfamily. In terms of assembly, interacts with the SSU processome.

The protein localises to the nucleus. It carries out the reaction ATP + H2O = ADP + phosphate + H(+). Functionally, ATP-dependent rRNA helicase required for pre-ribosomal RNA processing. Involved in the maturation of the 35S-pre-rRNA and to its cleavage to mature 18S rRNA. The polypeptide is ATP-dependent rRNA helicase rrp3 (Neosartorya fischeri (strain ATCC 1020 / DSM 3700 / CBS 544.65 / FGSC A1164 / JCM 1740 / NRRL 181 / WB 181) (Aspergillus fischerianus)).